Here is a 241-residue protein sequence, read N- to C-terminus: MPKKAVVLLSGGLDSSTVLAYALNKGFEVYAISFDYGQRHLKEMKSSEAISKFYNVDRKIVKVDLRSIGKSALTDNIEVPSRDISTIEEEIPVTYVPARNTIFLSIAAAYAESLGTNEVFIGANAIDYSGYPDCRPEYFNAMENALSLGTKIGLKEKFHINVPLQYLSKADIVKLGVKLNVPYELTWSCYKGEEEACGECDSCQLRLKGFMEAGFADPLKYSKYPEFYSKNLVKLRPLKRR.

ATP is bound at residue 9-19 (LSGGLDSSTVL). 4 residues coordinate Zn(2+): Cys-189, Cys-197, Cys-200, and Cys-203.

The protein belongs to the QueC family. Requires Zn(2+) as cofactor.

It catalyses the reaction 7-carboxy-7-deazaguanine + NH4(+) + ATP = 7-cyano-7-deazaguanine + ADP + phosphate + H2O + H(+). Its pathway is purine metabolism; 7-cyano-7-deazaguanine biosynthesis. In terms of biological role, catalyzes the ATP-dependent conversion of 7-carboxy-7-deazaguanine (CDG) to 7-cyano-7-deazaguanine (preQ(0)). The chain is 7-cyano-7-deazaguanine synthase from Thermoplasma volcanium (strain ATCC 51530 / DSM 4299 / JCM 9571 / NBRC 15438 / GSS1).